Here is a 307-residue protein sequence, read N- to C-terminus: Ribonuclease Z (307 aa).

Histidine 63, histidine 65, aspartate 67, histidine 68, histidine 140, aspartate 211, and histidine 269 together coordinate Zn(2+). Aspartate 67 serves as the catalytic Proton acceptor.

It belongs to the RNase Z family. As to quaternary structure, homodimer. Zn(2+) is required as a cofactor.

It catalyses the reaction Endonucleolytic cleavage of RNA, removing extra 3' nucleotides from tRNA precursor, generating 3' termini of tRNAs. A 3'-hydroxy group is left at the tRNA terminus and a 5'-phosphoryl group is left at the trailer molecule.. Functionally, zinc phosphodiesterase, which displays some tRNA 3'-processing endonuclease activity. Probably involved in tRNA maturation, by removing a 3'-trailer from precursor tRNA. The protein is Ribonuclease Z of Geobacillus kaustophilus (strain HTA426).